A 507-amino-acid chain; its full sequence is ATP synthase subunit alpha, chloroplastic (507 aa).

Residue 170–177 (GDRQTGKA) participates in ATP binding.

The protein belongs to the ATPase alpha/beta chains family. F-type ATPases have 2 components, CF(1) - the catalytic core - and CF(0) - the membrane proton channel. CF(1) has five subunits: alpha(3), beta(3), gamma(1), delta(1), epsilon(1). CF(0) has four main subunits: a, b, b' and c.

Its subcellular location is the plastid. The protein localises to the chloroplast thylakoid membrane. The catalysed reaction is ATP + H2O + 4 H(+)(in) = ADP + phosphate + 5 H(+)(out). Functionally, produces ATP from ADP in the presence of a proton gradient across the membrane. The alpha chain is a regulatory subunit. The protein is ATP synthase subunit alpha, chloroplastic of Calycanthus floridus var. glaucus (Eastern sweetshrub).